Here is a 682-residue protein sequence, read N- to C-terminus: DNA-directed RNA polymerase subunit beta' (682 aa).

The Zn(2+) site is built by Cys69, Cys71, Cys87, and Cys90. Mg(2+) is bound by residues Asp491, Asp493, and Asp495.

Belongs to the RNA polymerase beta' chain family. RpoC1 subfamily. In terms of assembly, in plastids the minimal PEP RNA polymerase catalytic core is composed of four subunits: alpha, beta, beta', and beta''. When a (nuclear-encoded) sigma factor is associated with the core the holoenzyme is formed, which can initiate transcription. Mg(2+) is required as a cofactor. Zn(2+) serves as cofactor.

Its subcellular location is the plastid. It is found in the chloroplast. It carries out the reaction RNA(n) + a ribonucleoside 5'-triphosphate = RNA(n+1) + diphosphate. DNA-dependent RNA polymerase catalyzes the transcription of DNA into RNA using the four ribonucleoside triphosphates as substrates. The protein is DNA-directed RNA polymerase subunit beta' of Lotus japonicus (Lotus corniculatus var. japonicus).